Reading from the N-terminus, the 616-residue chain is MDIYITKGITNPNYPGFQKFAHTLSDDYIEYSDMECNESDLTDSDREDDPTFPSKMAKESGSETFKNGQDSILSNCDNGNTYISEEESVNRSENIPDIVNENYSATSENSKRALQKPDLIYNLSQNYTTNPEFPSWSCTINSKYEGQLQGQSPIDIVGDFGGEVEREFELLLTGYKNKKEADELKGSNLDKICDAELSNGTEALKQTSSTRLSGNSTRKNKKKNTPYGHQIVKTKHPKPSHDERQLPPDTFDYKTYSQRKYIICDADQYSSVPEKNKNDSPNLNQAEIPNMSSLEIGGSGSQQNLDEDNNKVASRKYSNQSRWSQYLEDPIKYSKDPCSTMVLEQFDAYKIANDMDVETLQNHYKKVKQIEKKRRFNRDEIRKRLAIGDKDSLNNDIKKEEFLTGSDNESYSSDSETCPKLSSGVLRKQSEFCETKRNKEFENDKIFQKNQINQDKSMNHMNGNPIGTTDYPSDENLFFFANQSKLQIEVRIALAQSKEIAQMKVKARKHGVTPIVDVIRSMLCDVGIKMNSNHRWISRQLLTGIQVPTLQLLVNNLQEYIENLNVTLLESLKERDDLNSDQDDILHDLEKINNFFVFQQQSGQQVNKIVRHGHLD.

Positions 38–50 are enriched in acidic residues; it reads ESDLTDSDREDDP. 3 disordered regions span residues 38 to 71, 204 to 251, and 292 to 320; these read ESDL…GQDS, LKQT…PDTF, and SSLE…YSNQ. Polar residues-rich tracts occupy residues 62 to 71 and 204 to 217; these read SETFKNGQDS and LKQT…GNST. Residues 550–594 are a coiled coil; sequence LQLLVNNLQEYIENLNVTLLESLKERDDLNSDQDDILHDLEKINN.

Belongs to the SCHIP1 family. Interacts with ex; the interaction results in recruitment of Schip1 to the apical cell membrane. Interacts with Tao; the interaction enhances Tao kinase activity. Interacts with Mer. In eye disks of the third instar larvae, expressed in all cells (at protein level).

The protein resides in the cell junction. Its subcellular location is the adherens junction. It is found in the apical cell membrane. In terms of biological role, regulator of the Hippo/SWH (Sav/Wts/Hpo) signaling pathway, a signaling pathway that plays a pivotal role in organ size control and tumor suppression by restricting proliferation and promoting apoptosis. The core of this pathway is composed of a kinase cascade wherein Hippo (hpo), in complex with its regulatory protein Salvador (sav), phosphorylates and activates Warts (wts) in complex with its regulatory protein Mats, which in turn phosphorylates and inactivates the Yorkie (yki) oncoprotein. Schip1 promotes kinase activity of Tao and enhances phosphorylation of hpo by Tao. This is Schwannomin-interacting protein 1 homolog from Drosophila melanogaster (Fruit fly).